A 183-amino-acid chain; its full sequence is Capsid protein (183 aa).

The segment at 136-183 is disordered; sequence NAPILSTLPETTVVRRRGRSPRRRTPSPRRRRSQSPRRRRSQSRESQC. The segment covering 149–176 has biased composition (basic residues); sequence VRRRGRSPRRRTPSPRRRRSQSPRRRRS. 3 positions are modified to phosphoserine; by host: Ser-155, Ser-162, and Ser-170. One copy of the 1; half-length repeat lies at 155–161; the sequence is SPRRRTP. Positions 155-177 are 3 X 8 AA repeats of S-P-R-R-R-[PR]-S-Q; the sequence is SPRRRTPSPRRRRSQSPRRRRSQ. The Bipartite nuclear localization signal signature appears at 158 to 175; sequence RRTPSPRRRRSQSPRRRR. Tandem repeats lie at residues 162–169 and 170–177. The segment at 177–183 is RNA binding; sequence QSRESQC.

It belongs to the orthohepadnavirus core antigen family. Homodimerizes, then multimerizes. Interacts with cytosol exposed regions of viral L glycoprotein present in the reticulum-to-Golgi compartment. Interacts with human FLNB. Phosphorylated form interacts with host importin alpha; this interaction depends on the exposure of the NLS, which itself depends upon genome maturation and/or phosphorylation of the capsid protein. Interacts with host NUP153. In terms of processing, phosphorylated by host SRPK1, SRPK2, and maybe protein kinase C or GAPDH. Phosphorylation is critical for pregenomic RNA packaging. Protein kinase C phosphorylation is stimulated by HBx protein and may play a role in transport of the viral genome to the nucleus at the late step during the viral replication cycle.

The protein resides in the virion. Its subcellular location is the host cytoplasm. Its function is as follows. Self assembles to form an icosahedral capsid. Most capsids appear to be large particles with an icosahedral symmetry of T=4 and consist of 240 copies of capsid protein, though a fraction forms smaller T=3 particles consisting of 180 capsid proteins. Entering capsids are transported along microtubules to the nucleus. Phosphorylation of the capsid is thought to induce exposure of nuclear localization signal in the C-terminal portion of the capsid protein that allows binding to the nuclear pore complex via the importin (karyopherin-) alpha and beta. Capsids are imported in intact form through the nuclear pore into the nuclear basket, where it probably binds NUP153. Only capsids that contain the mature viral genome can release the viral DNA and capsid protein into the nucleoplasm. Immature capsids get stuck in the basket. Capsids encapsulate the pre-genomic RNA and the P protein. Pre-genomic RNA is reverse-transcribed into DNA while the capsid is still in the cytoplasm. The capsid can then either be directed to the nucleus, providing more genomes for transcription, or bud through the endoplasmic reticulum to provide new virions. This is Capsid protein from Hepatitis B virus genotype D subtype ayw (isolate France/Tiollais/1979) (HBV-D).